Consider the following 131-residue polypeptide: uncharacterized protein (131 aa).

3 consecutive transmembrane segments (helical) span residues 13–35, 60–79, and 100–119; these read RFIKFVFPFPATGIYFHGYTFPI, LVALPILMLQPSMYVCTYVC, and LFEIVLYYLSVCTPYWWNIT.

The protein resides in the membrane. This is an uncharacterized protein from Saccharomyces cerevisiae (strain ATCC 204508 / S288c) (Baker's yeast).